The following is a 366-amino-acid chain: Homeobox-leucine zipper protein HOX21 (366 aa).

Disordered stretches follow at residues 25-81 and 94-132; these read QQAA…SSAQ and MLGK…EKKR. Over residues 36–48 the composition is skewed to basic residues; that stretch reads HHHHHHHGHHGHH. Pro residues predominate over residues 62–74; it reads GPPPPPPPHPHNP. Positions 103-115 are enriched in gly residues; that stretch reads GDGGGGGDEVNGG. Residues 127–186 constitute a DNA-binding region (homeobox); sequence AGEKKRRLNVEQVRTLEKNFELGNKLEPERKMQLARALGLQPRQVAIWFQNRRARWKTKQ. Residues 185-229 are leucine-zipper; sequence KQLEKDYDALKRQLDAVKAENDALLNHNKKLQAEIVALKGREAAS. Disordered regions lie at residues 239–287 and 312–336; these read EASC…GGGG and LHSS…VQAA. Over residues 240-252 the composition is skewed to polar residues; the sequence is ASCSNRSENSSEI.

The protein belongs to the HD-ZIP homeobox family. Class I subfamily. As to expression, expressed in seedlings, roots, stems, leaf blades and panicles.

The protein localises to the nucleus. Its function is as follows. Probable transcription factor. The sequence is that of Homeobox-leucine zipper protein HOX21 (HOX21) from Oryza sativa subsp. japonica (Rice).